Reading from the N-terminus, the 299-residue chain is Heterodisulfide reductase subunit B-like protein (299 aa).

This sequence belongs to the HdrB family. In terms of assembly, the heterodisulfide reductase is composed of three subunits; HdlA, HdlB and HdlC. It forms a complex with the F420-non-reducing hydrogenase (Mvh), which provides the reducing equivalents to the heterodisulfide reductase.

Its subcellular location is the cytoplasm. Functionally, has oxidoreductase activity. The Hdl and Mvh subunits may together mediate electron transfer from hydrogen to an unidentified electron acceptor on the cytoplasmic side of the membrane. This is Heterodisulfide reductase subunit B-like protein (hdlB) from Archaeoglobus profundus (strain DSM 5631 / JCM 9629 / NBRC 100127 / Av18).